Here is a 360-residue protein sequence, read N- to C-terminus: Putative beta-glucosidase 15 (360 aa).

Composition is skewed to basic and acidic residues over residues 1–11 (MARRRMGEEGK) and 47–67 (GRRE…ERKG). 2 disordered regions span residues 1-21 (MARR…NGRQ) and 35-103 (GWRS…RAER). Positions 75–86 (GKRRRERRRGGR) are enriched in basic residues. Tyr-183 lines the a beta-D-glucoside pocket. Cys-191 and Cys-196 are oxidised to a cystine. A beta-D-glucoside-binding positions include Glu-254, Trp-301, 308–309 (EW), and Phe-317. Residue Glu-254 is the Nucleophile of the active site. Asn-346 carries an N-linked (GlcNAc...) asparagine glycan.

Belongs to the glycosyl hydrolase 1 family.

The catalysed reaction is Hydrolysis of terminal, non-reducing beta-D-glucosyl residues with release of beta-D-glucose.. This chain is Putative beta-glucosidase 15 (BGLU15), found in Oryza sativa subsp. japonica (Rice).